A 481-amino-acid chain; its full sequence is Aspartyl/glutamyl-tRNA(Asn/Gln) amidotransferase subunit B (481 aa).

Belongs to the GatB/GatE family. GatB subfamily. Heterotrimer of A, B and C subunits.

The catalysed reaction is L-glutamyl-tRNA(Gln) + L-glutamine + ATP + H2O = L-glutaminyl-tRNA(Gln) + L-glutamate + ADP + phosphate + H(+). It carries out the reaction L-aspartyl-tRNA(Asn) + L-glutamine + ATP + H2O = L-asparaginyl-tRNA(Asn) + L-glutamate + ADP + phosphate + 2 H(+). Functionally, allows the formation of correctly charged Asn-tRNA(Asn) or Gln-tRNA(Gln) through the transamidation of misacylated Asp-tRNA(Asn) or Glu-tRNA(Gln) in organisms which lack either or both of asparaginyl-tRNA or glutaminyl-tRNA synthetases. The reaction takes place in the presence of glutamine and ATP through an activated phospho-Asp-tRNA(Asn) or phospho-Glu-tRNA(Gln). The sequence is that of Aspartyl/glutamyl-tRNA(Asn/Gln) amidotransferase subunit B from Teredinibacter turnerae (strain ATCC 39867 / T7901).